Reading from the N-terminus, the 159-residue chain is Nascent polypeptide-associated complex subunit beta (159 aa).

Disordered stretches follow at residues 1–39 (MDME…GMDD) and 124–159 (QSMQ…DKVE). The span at 23–32 (TPRRKVKNVH) shows a compositional bias: basic residues. An NAC-A/B domain is found at 36 to 101 (GMDDKKLQTS…GEDKELTELV (66 aa)). Residues 136-153 (KDDEEDDDDIPDLVEGEN) are compositionally biased toward acidic residues.

This sequence belongs to the NAC-beta family. Part of the nascent polypeptide-associated complex (NAC), consisting of EGD2 and EGD1. NAC associates with ribosomes via EGD1.

The protein localises to the cytoplasm. The protein resides in the nucleus. In terms of biological role, component of the nascent polypeptide-associated complex (NAC), a dynamic component of the ribosomal exit tunnel, protecting the emerging polypeptides from interaction with other cytoplasmic proteins to ensure appropriate nascent protein targeting. The NAC complex also promotes mitochondrial protein import by enhancing productive ribosome interactions with the outer mitochondrial membrane and blocks the inappropriate interaction of ribosomes translating non-secretory nascent polypeptides with translocation sites in the membrane of the endoplasmic reticulum. EGD1 may act as a transcription factor that exert a negative effect on the expression of several genes that are transcribed by RNA polymerase II. The polypeptide is Nascent polypeptide-associated complex subunit beta (egd1) (Sclerotinia sclerotiorum (strain ATCC 18683 / 1980 / Ss-1) (White mold)).